The following is a 431-amino-acid chain: MANSC domain-containing protein 1 (431 aa).

The N-terminal stretch at 1-26 is a signal peptide; sequence MFFGGEGSLTYTLVIICFLTLRLSAS. Topologically, residues 27 to 385 are extracellular; that stretch reads QNCLKKSLED…QYGLPFEKWL (359 aa). An MANSC domain is found at 33–117; that stretch reads SLEDVVIDIQ…LKPAKGLMSY (85 aa). Asn-72, Asn-222, and Asn-251 each carry an N-linked (GlcNAc...) asparagine glycan. The interval 234–277 is disordered; that stretch reads SPHTTSATPKPATLLPTNASVTPSGTSQPQLATTAPPVTTVTSQ. Positions 248–261 are enriched in polar residues; it reads LPTNASVTPSGTSQ. Positions 262–277 are enriched in low complexity; the sequence is PQLATTAPPVTTVTSQ. N-linked (GlcNAc...) asparagine glycosylation is found at Asn-327 and Asn-352. The interval 352–372 is disordered; the sequence is NKTASWEGREASPGSSSQGSV. Residues 386 to 408 form a helical membrane-spanning segment; it reads LIGSLLFGVLFLVIGLVLLGRIL. Residues 409–431 lie on the Cytoplasmic side of the membrane; it reads SESLRRKRYSRLDYLINGIYVDI.

Widely expressed.

It is found in the membrane. The polypeptide is MANSC domain-containing protein 1 (MANSC1) (Homo sapiens (Human)).